The chain runs to 187 residues: Transcriptional regulator VspR (187 aa).

In terms of biological role, represses the transcription of several genes encoded within the Vibrio 7th pandemic island-1 (VSP-1), including dncV, VC_0176, VC_0178 and VC_0180. The polypeptide is Transcriptional regulator VspR (vspR) (Vibrio cholerae serotype O1 (strain ATCC 39315 / El Tor Inaba N16961)).